We begin with the raw amino-acid sequence, 77 residues long: Acyl carrier protein (77 aa).

In terms of domain architecture, Carrier spans 1-76; it reads MATFDDVKAV…DVVNYIDNLK (76 aa). Ser-36 carries the post-translational modification O-(pantetheine 4'-phosphoryl)serine.

Belongs to the acyl carrier protein (ACP) family. 4'-phosphopantetheine is transferred from CoA to a specific serine of apo-ACP by AcpS. This modification is essential for activity because fatty acids are bound in thioester linkage to the sulfhydryl of the prosthetic group.

Its subcellular location is the cytoplasm. Its pathway is lipid metabolism; fatty acid biosynthesis. In terms of biological role, carrier of the growing fatty acid chain in fatty acid biosynthesis. In Campylobacter jejuni subsp. doylei (strain ATCC BAA-1458 / RM4099 / 269.97), this protein is Acyl carrier protein.